The sequence spans 103 residues: Pyrimidine/purine nucleoside phosphorylase (103 aa).

The protein belongs to the nucleoside phosphorylase PpnP family.

It carries out the reaction a purine D-ribonucleoside + phosphate = a purine nucleobase + alpha-D-ribose 1-phosphate. The enzyme catalyses adenosine + phosphate = alpha-D-ribose 1-phosphate + adenine. It catalyses the reaction cytidine + phosphate = cytosine + alpha-D-ribose 1-phosphate. The catalysed reaction is guanosine + phosphate = alpha-D-ribose 1-phosphate + guanine. It carries out the reaction inosine + phosphate = alpha-D-ribose 1-phosphate + hypoxanthine. The enzyme catalyses thymidine + phosphate = 2-deoxy-alpha-D-ribose 1-phosphate + thymine. It catalyses the reaction uridine + phosphate = alpha-D-ribose 1-phosphate + uracil. The catalysed reaction is xanthosine + phosphate = alpha-D-ribose 1-phosphate + xanthine. In terms of biological role, catalyzes the phosphorolysis of diverse nucleosides, yielding D-ribose 1-phosphate and the respective free bases. Can use uridine, adenosine, guanosine, cytidine, thymidine, inosine and xanthosine as substrates. Also catalyzes the reverse reactions. The sequence is that of Pyrimidine/purine nucleoside phosphorylase from Shewanella baltica (strain OS155 / ATCC BAA-1091).